The following is a 129-amino-acid chain: Probable protein cornichon homolog 2 (129 aa).

2 helical membrane-spanning segments follow: residues 45 to 65 (FIVQ…FMTL) and 105 to 125 (LAYI…SALD).

The protein belongs to the cornichon family.

Its subcellular location is the membrane. The chain is Probable protein cornichon homolog 2 from Arabidopsis thaliana (Mouse-ear cress).